Reading from the N-terminus, the 362-residue chain is Carbamoyl phosphate synthase pyrimidine-specific small chain (362 aa).

The interval 1-168 (MKRQLILEDG…TRDPYHVPGP (168 aa)) is CPSase. L-glutamine contacts are provided by serine 45, glycine 219, and glycine 221. The region spanning 171–358 (RVVLVDYGMK…IKLMESNKHR (188 aa)) is the Glutamine amidotransferase type-1 domain. Cysteine 246 functions as the Nucleophile in the catalytic mechanism. L-glutamine-binding residues include leucine 247, glutamine 250, asparagine 288, glycine 290, and tyrosine 291. Catalysis depends on residues histidine 331 and glutamate 333.

Belongs to the CarA family. In terms of assembly, composed of two chains; the small (or glutamine) chain promotes the hydrolysis of glutamine to ammonia, which is used by the large (or ammonia) chain to synthesize carbamoyl phosphate. Tetramer of heterodimers (alpha,beta)4.

It catalyses the reaction hydrogencarbonate + L-glutamine + 2 ATP + H2O = carbamoyl phosphate + L-glutamate + 2 ADP + phosphate + 2 H(+). The enzyme catalyses L-glutamine + H2O = L-glutamate + NH4(+). It participates in pyrimidine metabolism; UMP biosynthesis via de novo pathway; (S)-dihydroorotate from bicarbonate: step 1/3. Small subunit of the glutamine-dependent carbamoyl phosphate synthetase (CPSase). CPSase catalyzes the formation of carbamoyl phosphate from the ammonia moiety of glutamine, carbonate, and phosphate donated by ATP, constituting the first step of the biosynthetic pathway leading to pyrimidine nucleotides. The small subunit (glutamine amidotransferase) binds and cleaves glutamine to supply the large subunit with the substrate ammonia. The sequence is that of Carbamoyl phosphate synthase pyrimidine-specific small chain from Halalkalibacterium halodurans (strain ATCC BAA-125 / DSM 18197 / FERM 7344 / JCM 9153 / C-125) (Bacillus halodurans).